We begin with the raw amino-acid sequence, 543 residues long: Aspartate/alanine antiporter (543 aa).

A run of 10 helical transmembrane segments spans residues 4-26 (IGNF…GYLL), 33-55 (SFTL…LGVF), 88-110 (FGAK…AYAC), 117-139 (GPGI…GSSL), 159-178 (IPIV…LIFL), 362-381 (IINY…LGIV), 385-407 (VSGV…VQSI), 428-450 (SIGL…ISAI), 455-477 (ISVL…VICY), and 520-542 (VAPA…IVLL).

Belongs to the AAE transporter (TC 2.A.81) family.

Its subcellular location is the cell membrane. Functionally, catalyzes the electrogenic exchange of aspartate with alanine. The polypeptide is Aspartate/alanine antiporter (aspT) (Tetragenococcus halophilus (Pediococcus halophilus)).